A 345-amino-acid polypeptide reads, in one-letter code: UDP-3-O-acylglucosamine N-acyltransferase (345 aa).

Catalysis depends on H252, which acts as the Proton acceptor.

It belongs to the transferase hexapeptide repeat family. LpxD subfamily. Homotrimer.

It catalyses the reaction a UDP-3-O-[(3R)-3-hydroxyacyl]-alpha-D-glucosamine + a (3R)-hydroxyacyl-[ACP] = a UDP-2-N,3-O-bis[(3R)-3-hydroxyacyl]-alpha-D-glucosamine + holo-[ACP] + H(+). It participates in bacterial outer membrane biogenesis; LPS lipid A biosynthesis. Its function is as follows. Catalyzes the N-acylation of UDP-3-O-acylglucosamine using 3-hydroxyacyl-ACP as the acyl donor. Is involved in the biosynthesis of lipid A, a phosphorylated glycolipid that anchors the lipopolysaccharide to the outer membrane of the cell. The sequence is that of UDP-3-O-acylglucosamine N-acyltransferase from Rickettsia rickettsii.